Consider the following 610-residue polypeptide: Pentatricopeptide repeat-containing protein At3g15590, mitochondrial (610 aa).

Residues 1–71 (MYSLSRILQR…FSRFFGIHKL (71 aa)) constitute a mitochondrion transit peptide. The tract at residues 88 to 142 (EELSESEEAVPVSGDVPEGVVDDDSLFEPELGSDNDDLEIEEKHSKDGGKPTKKR) is disordered. Positions 107–127 (VVDDDSLFEPELGSDNDDLEI) are enriched in acidic residues. Over residues 128 to 137 (EEKHSKDGGK) the composition is skewed to basic and acidic residues. 9 PPR repeats span residues 241 to 275 (GEVVYRTLLANCVLKHHVNKAEDIFNKMKELKFPT), 276 to 309 (SVFACNQLLLLYSMHDRKKISDVLLLMERENIKP), 310 to 344 (SRATYHFLINSKGLAGDITGMEKIVETIKEEGIEL), 345 to 379 (DPELQSILAKYYIRAGLKERAQDLMKEIEGKGLQQ), 380 to 410 (TPWVCRSLLPLYADIGDSDNVRRLSRFVDQN), 412 to 442 (RYDNCISAIKAWGKLKEVEEAEAVFERLVEK), 447 to 481 (PMMPYFALMEIYTENKMLAKGRDLVKRMGNAGIAI), 482 to 517 (GPSTWHALVKLYIKAGEVGKAELILNRATKDNKMRP), and 518 to 552 (MFTTYMAILEEYAKRGDVHNTEKVFMKMKRASYAA).

Belongs to the PPR family. P subfamily.

The protein localises to the mitochondrion. In Arabidopsis thaliana (Mouse-ear cress), this protein is Pentatricopeptide repeat-containing protein At3g15590, mitochondrial.